We begin with the raw amino-acid sequence, 268 residues long: Undecaprenyl-diphosphatase (268 aa).

7 consecutive transmembrane segments (helical) span residues 5-25, 43-63, 84-104, 107-127, 184-204, 213-233, and 248-268; these read SIIS…IPVS, GNTF…LVYF, FSVL…HGFI, VLFE…IILY, AAEF…ALDL, FDDV…GIFV, and PFAI…WLLG.

Belongs to the UppP family.

It is found in the cell inner membrane. The catalysed reaction is di-trans,octa-cis-undecaprenyl diphosphate + H2O = di-trans,octa-cis-undecaprenyl phosphate + phosphate + H(+). Catalyzes the dephosphorylation of undecaprenyl diphosphate (UPP). Confers resistance to bacitracin. The polypeptide is Undecaprenyl-diphosphatase (Rhizobium meliloti (strain 1021) (Ensifer meliloti)).